A 137-amino-acid polypeptide reads, in one-letter code: Nucleoside diphosphate kinase (137 aa).

Residues K9, F57, R85, T91, R102, and N112 each coordinate ATP. The Pros-phosphohistidine intermediate role is filled by H115.

This sequence belongs to the NDK family. In terms of assembly, homotetramer. Mg(2+) is required as a cofactor.

The protein localises to the cytoplasm. It carries out the reaction a 2'-deoxyribonucleoside 5'-diphosphate + ATP = a 2'-deoxyribonucleoside 5'-triphosphate + ADP. It catalyses the reaction a ribonucleoside 5'-diphosphate + ATP = a ribonucleoside 5'-triphosphate + ADP. Major role in the synthesis of nucleoside triphosphates other than ATP. The ATP gamma phosphate is transferred to the NDP beta phosphate via a ping-pong mechanism, using a phosphorylated active-site intermediate. The protein is Nucleoside diphosphate kinase of Campylobacter jejuni subsp. jejuni serotype O:2 (strain ATCC 700819 / NCTC 11168).